Here is a 449-residue protein sequence, read N- to C-terminus: Probable pectate lyase P59 (449 aa).

A signal peptide spans Met1–Pro22. Asn56, Asn80, and Asn81 each carry an N-linked (GlcNAc...) asparagine glycan. The Ca(2+) site is built by Asp245, Asp269, and Asp273. The active site involves Arg325.

It belongs to the polysaccharide lyase 1 family. Ca(2+) is required as a cofactor. As to expression, expressed in anthers and pollen.

The enzyme catalyses Eliminative cleavage of (1-&gt;4)-alpha-D-galacturonan to give oligosaccharides with 4-deoxy-alpha-D-galact-4-enuronosyl groups at their non-reducing ends.. It functions in the pathway glycan metabolism; pectin degradation; 2-dehydro-3-deoxy-D-gluconate from pectin: step 2/5. In terms of biological role, might be needed during pollen development and tube growth. This chain is Probable pectate lyase P59 (LAT59), found in Solanum lycopersicum (Tomato).